The following is a 429-amino-acid chain: Glutamate-1-semialdehyde 2,1-aminomutase (429 aa).

Lysine 267 carries the N6-(pyridoxal phosphate)lysine modification.

Belongs to the class-III pyridoxal-phosphate-dependent aminotransferase family. HemL subfamily. As to quaternary structure, homodimer. Requires pyridoxal 5'-phosphate as cofactor.

Its subcellular location is the cytoplasm. It catalyses the reaction (S)-4-amino-5-oxopentanoate = 5-aminolevulinate. The protein operates within porphyrin-containing compound metabolism; protoporphyrin-IX biosynthesis; 5-aminolevulinate from L-glutamyl-tRNA(Glu): step 2/2. The protein is Glutamate-1-semialdehyde 2,1-aminomutase of Xanthomonas oryzae pv. oryzae (strain MAFF 311018).